The chain runs to 172 residues: Large ribosomal subunit protein uL10 (172 aa).

Belongs to the universal ribosomal protein uL10 family. In terms of assembly, part of the ribosomal stalk of the 50S ribosomal subunit. The N-terminus interacts with L11 and the large rRNA to form the base of the stalk. The C-terminus forms an elongated spine to which L12 dimers bind in a sequential fashion forming a multimeric L10(L12)X complex.

Functionally, forms part of the ribosomal stalk, playing a central role in the interaction of the ribosome with GTP-bound translation factors. This is Large ribosomal subunit protein uL10 from Ruegeria sp. (strain TM1040) (Silicibacter sp.).